The primary structure comprises 261 residues: Large ribosomal subunit protein uL10m (261 aa).

A mitochondrion-targeting transit peptide spans 1–28 (MAAAVAGMLRGGLLPQAGRLPTLQTVRY). The disordered stretch occupies residues 242–261 (EKDSVMSANGKPDPDTVPDS).

This sequence belongs to the universal ribosomal protein uL10 family. Component of the mitochondrial large ribosomal subunit (mt-LSU). Mature mammalian 55S mitochondrial ribosomes consist of a small (28S) and a large (39S) subunit. The 28S small subunit contains a 12S ribosomal RNA (12S mt-rRNA) and 30 different proteins. The 39S large subunit contains a 16S rRNA (16S mt-rRNA), a copy of mitochondrial valine transfer RNA (mt-tRNA(Val)), which plays an integral structural role, and 52 different proteins. uL10m contributes a single cysteine residue to a zinc-binding site with mL66.

It is found in the mitochondrion. In Homo sapiens (Human), this protein is Large ribosomal subunit protein uL10m (MRPL10).